A 255-amino-acid polypeptide reads, in one-letter code: MELNLDIYVDYKDKRYKAEGYYGPSVGDLVLIFMDMELEGATVQEVARIEGSEIHLRTPNGNEPSYRYMGQYLILKPYGSSDPRGDILVHEDVQYVRVDAQAMPGDLIEALEPNKLPFSGKRFKYRPAVLEVEYVLTKDEQVLQLENGKSYSGAYRVLIPRMGVLPPKTHIYTTHKHVFMEDVFVLGNSYELSSPNDVEMTPIHAVFTGFSKNRDEAIFVNPYYNDDGVTGTMITVSDLLTGKWDITPLVPKKGV.

This Bacillus phage SP01 (Bacteriophage SP01) protein is Putative gene 39 protein (39).